We begin with the raw amino-acid sequence, 126 residues long: Major sperm protein 2 (126 aa).

At alanine 2 the chain carries N-acetylalanine. Residues 8-125 (DIATMPNQKV…RRKNLPIEYN (118 aa)) form the MSP domain.

Sperm.

It localises to the cell projection. Its subcellular location is the pseudopodium. The protein resides in the cytoplasm. The protein localises to the cytoskeleton. Its function is as follows. Central component in molecular interactions underlying sperm crawling. Forms an extensive filament system that extends from sperm villipoda, along the leading edge of the pseudopod. In Globodera rostochiensis (Golden nematode worm), this protein is Major sperm protein 2 (MSP-2).